Consider the following 185-residue polypeptide: Large ribosomal subunit protein bL25 (185 aa).

The protein belongs to the bacterial ribosomal protein bL25 family. CTC subfamily. Part of the 50S ribosomal subunit; part of the 5S rRNA/L5/L18/L25 subcomplex. Contacts the 5S rRNA. Binds to the 5S rRNA independently of L5 and L18.

In terms of biological role, this is one of the proteins that binds to the 5S RNA in the ribosome where it forms part of the central protuberance. This is Large ribosomal subunit protein bL25 from Chlamydia pneumoniae (Chlamydophila pneumoniae).